The sequence spans 988 residues: Putative disease resistance protein RGA4 (988 aa).

Residues 137–439 (AAAATRETGF…MAHGFLLSKG (303 aa)) enclose the NB-ARC domain. ATP is bound at residue 184–191 (GMGGLGKT). 14 LRR repeats span residues 526 to 548 (FVSL…SIGD), 549 to 572 (LLHL…LCKL), 574 to 595 (NLQT…QTSK), 596 to 620 (LSSL…GLLT), 638 to 662 (LGEL…KNDT), 674 to 696 (LQSL…EVKV), 751 to 776 (LPCL…DVHS), 784 to 808 (FPSL…EGEE), 829 to 851 (LSSV…SISN), 852 to 876 (LSTL…MFTS), 878 to 900 (TNLE…SLTS), 901 to 925 (LNAL…GLEG), 927 to 950 (TSLT…LQHL), and 966 to 988 (KRCD…LDIH).

It belongs to the disease resistance NB-LRR family.

Functionally, disease resistance protein. Resistance proteins guard the plant against pathogens that contain an appropriate avirulence protein via a direct or indirect interaction with this avirulence protein. That triggers a defense system which restricts the pathogen growth. The polypeptide is Putative disease resistance protein RGA4 (RGA4) (Solanum bulbocastanum (Wild potato)).